Reading from the N-terminus, the 180-residue chain is MANALKEKYVNEVQPALIEKFNFKSSMQAPKIDKIVLNMGVGDAVSNSKNLDEAVEELKLIAGQQPVITKAKKSIAGFRLREGMSIGTKVTLRGERMYDFLDKLINISLPRVRDFRGVSSKAFDGRGNYTLGIREQLIFPEIDFDKVNRVRGLDIVIVTTAQNDEEGRELLTQMGMPFAK.

It belongs to the universal ribosomal protein uL5 family. As to quaternary structure, part of the 50S ribosomal subunit; part of the 5S rRNA/L5/L18/L25 subcomplex. Contacts the 5S rRNA and the P site tRNA. Forms a bridge to the 30S subunit in the 70S ribosome.

This is one of the proteins that bind and probably mediate the attachment of the 5S RNA into the large ribosomal subunit, where it forms part of the central protuberance. In the 70S ribosome it contacts protein S13 of the 30S subunit (bridge B1b), connecting the 2 subunits; this bridge is implicated in subunit movement. Contacts the P site tRNA; the 5S rRNA and some of its associated proteins might help stabilize positioning of ribosome-bound tRNAs. In Leuconostoc mesenteroides subsp. mesenteroides (strain ATCC 8293 / DSM 20343 / BCRC 11652 / CCM 1803 / JCM 6124 / NCDO 523 / NBRC 100496 / NCIMB 8023 / NCTC 12954 / NRRL B-1118 / 37Y), this protein is Large ribosomal subunit protein uL5.